The primary structure comprises 180 residues: Adenine phosphoribosyltransferase (180 aa).

This sequence belongs to the purine/pyrimidine phosphoribosyltransferase family. Homodimer.

The protein resides in the cytoplasm. It catalyses the reaction AMP + diphosphate = 5-phospho-alpha-D-ribose 1-diphosphate + adenine. Its pathway is purine metabolism; AMP biosynthesis via salvage pathway; AMP from adenine: step 1/1. Its function is as follows. Catalyzes a salvage reaction resulting in the formation of AMP, that is energically less costly than de novo synthesis. The polypeptide is Adenine phosphoribosyltransferase (Haemophilus influenzae (strain 86-028NP)).